Consider the following 208-residue polypeptide: Ribosomal RNA small subunit methyltransferase G (208 aa).

Residues glycine 76, leucine 81, 127–128 (VE), and arginine 142 contribute to the S-adenosyl-L-methionine site.

It belongs to the methyltransferase superfamily. RNA methyltransferase RsmG family.

The protein localises to the cytoplasm. It carries out the reaction guanosine(527) in 16S rRNA + S-adenosyl-L-methionine = N(7)-methylguanosine(527) in 16S rRNA + S-adenosyl-L-homocysteine. Functionally, specifically methylates the N7 position of guanine in position 527 of 16S rRNA. The polypeptide is Ribosomal RNA small subunit methyltransferase G (Legionella pneumophila subsp. pneumophila (strain Philadelphia 1 / ATCC 33152 / DSM 7513)).